Here is a 1220-residue protein sequence, read N- to C-terminus: ATP-dependent helicase/nuclease subunit A (1220 aa).

A UvrD-like helicase ATP-binding domain is found at 9–473 (VIWTDDQWKS…IDLSQNFRSR (465 aa)). 30 to 37 (AAAGSGKT) provides a ligand contact to ATP. The region spanning 474–782 (PEVLSTTNYL…RMMTIHASKG (309 aa)) is the UvrD-like helicase C-terminal domain.

The protein belongs to the helicase family. AddA subfamily. As to quaternary structure, heterodimer of AddA and AddB/RexB. Mg(2+) serves as cofactor.

It catalyses the reaction Couples ATP hydrolysis with the unwinding of duplex DNA by translocating in the 3'-5' direction.. The enzyme catalyses ATP + H2O = ADP + phosphate + H(+). The heterodimer acts as both an ATP-dependent DNA helicase and an ATP-dependent, dual-direction single-stranded exonuclease. Recognizes the chi site generating a DNA molecule suitable for the initiation of homologous recombination. The AddA nuclease domain is required for chi fragment generation; this subunit has the helicase and 3' -&gt; 5' nuclease activities. This chain is ATP-dependent helicase/nuclease subunit A, found in Staphylococcus carnosus (strain TM300).